A 284-amino-acid chain; its full sequence is 4-hydroxybenzoate octaprenyltransferase (284 aa).

Helical transmembrane passes span Val33 to Phe53, Ile93 to Leu113, His136 to Ala156, Gly159 to Tyr179, Leu209 to Tyr229, Tyr235 to Leu252, and Ala264 to Trp284.

Belongs to the UbiA prenyltransferase family. The cofactor is Mg(2+).

It is found in the cell inner membrane. The catalysed reaction is all-trans-octaprenyl diphosphate + 4-hydroxybenzoate = 4-hydroxy-3-(all-trans-octaprenyl)benzoate + diphosphate. It participates in cofactor biosynthesis; ubiquinone biosynthesis. Functionally, catalyzes the prenylation of para-hydroxybenzoate (PHB) with an all-trans polyprenyl group. Mediates the second step in the final reaction sequence of ubiquinone-8 (UQ-8) biosynthesis, which is the condensation of the polyisoprenoid side chain with PHB, generating the first membrane-bound Q intermediate 3-octaprenyl-4-hydroxybenzoate. In Vibrio parahaemolyticus serotype O3:K6 (strain RIMD 2210633), this protein is 4-hydroxybenzoate octaprenyltransferase.